The following is a 139-amino-acid chain: D-ribose pyranase (139 aa).

The active-site Proton donor is the His-20. Substrate-binding positions include Asp-28, His-106, and 128–130 (YAN).

The protein belongs to the RbsD / FucU family. RbsD subfamily. As to quaternary structure, homodecamer.

Its subcellular location is the cytoplasm. It carries out the reaction beta-D-ribopyranose = beta-D-ribofuranose. It participates in carbohydrate metabolism; D-ribose degradation; D-ribose 5-phosphate from beta-D-ribopyranose: step 1/2. Catalyzes the interconversion of beta-pyran and beta-furan forms of D-ribose. The chain is D-ribose pyranase from Escherichia coli O6:H1 (strain CFT073 / ATCC 700928 / UPEC).